Consider the following 99-residue polypeptide: Small ribosomal subunit protein uS19 (99 aa).

This sequence belongs to the universal ribosomal protein uS19 family.

Functionally, protein S19 forms a complex with S13 that binds strongly to the 16S ribosomal RNA. This chain is Small ribosomal subunit protein uS19, found in Sulfurihydrogenibium sp. (strain YO3AOP1).